The following is a 116-amino-acid chain: Spexin (116 aa).

Positions 1 to 26 (MKGPSILAVAALALLLVLSVLENSSG) are cleaved as a signal peptide. A propeptide spanning residues 27-35 (APQRLSEKR) is cleaved from the precursor. Position 49 is a glutamine amide (glutamine 49). 2 propeptides span residues 50–116 (GHRF…RFYW) and 74–116 (PNLQ…RFYW). The span at 56-73 (DQSRRKELADRPPPERRN) shows a compositional bias: basic and acidic residues. The segment at 56–75 (DQSRRKELADRPPPERRNPN) is disordered.

It belongs to the spexin family. In terms of tissue distribution, widely expressed; predominantly expressed in epithelial cells in the skin, respiratory, digestive, urinary and reproductive systems, retina, adrenal gland and various brain regions. In the adrenal gland, expressed in parenchymal cells of the cortex and in ganglionic cells and intermingled cortical cells of the medulla. Expressed in the type I glomic cells within the carotid body (at protein level). Widely expressed. Strongly expressed in esophagus, liver, pancreas, kidney, brain, hypothalamus, thyroid and ovary. Expressed in the zona glomerulosa (ZG) and zona fasciculata/reticularis (ZF/R) of the adrenal gland. Also expressed in stomach, lung, skeletal muscle, heart, uterus, spleen, adrenal gland and testis. Weakly expressed in small intestine, thymus, urinary bladder and adenohypophysis. In the brain, is expressed in the Barrington's nucleus, with lesser amount in the ventrolateral caudal periaqueductal gray (PAG) and in the mesopontine tegmentum.

The protein localises to the secreted. The protein resides in the extracellular space. It is found in the cytoplasmic vesicle. Its subcellular location is the secretory vesicle. Its function is as follows. Plays a role as a central modulator of cardiovascular and renal function and nociception. Also plays a role in energy metabolism and storage. Inhibits adrenocortical cell proliferation with minor stimulation on corticosteroid release. In terms of biological role, acts as a ligand for galanin receptors GALR2 and GALR3. Intracerebroventricular administration of the peptide induces an increase in arterial blood pressure, a decrease in both heart rate and renal excretion and delayed natriuresis. Intraventricular administration of the peptide induces antinociceptive activity. Intraperitoneal administration of the peptide induces a reduction in food consumption and body weight. Inhibits long chain fatty acid uptake into adipocytes. Also induces contraction of muscarinic-like stomach smooth muscles. Functionally, intracerebroventricular administration of the peptide induces a decrease in heart rate, but no change in arterial pressure, and an increase in urine flow rate. Intraventricular administration of the peptide induces antinociceptive activity. The chain is Spexin (SPX) from Rattus norvegicus (Rat).